The primary structure comprises 356 residues: Histidinol-phosphate aminotransferase (356 aa).

Lys214 carries the post-translational modification N6-(pyridoxal phosphate)lysine.

This sequence belongs to the class-II pyridoxal-phosphate-dependent aminotransferase family. Histidinol-phosphate aminotransferase subfamily. Homodimer. The cofactor is pyridoxal 5'-phosphate.

It catalyses the reaction L-histidinol phosphate + 2-oxoglutarate = 3-(imidazol-4-yl)-2-oxopropyl phosphate + L-glutamate. It participates in amino-acid biosynthesis; L-histidine biosynthesis; L-histidine from 5-phospho-alpha-D-ribose 1-diphosphate: step 7/9. The sequence is that of Histidinol-phosphate aminotransferase from Escherichia coli O7:K1 (strain IAI39 / ExPEC).